We begin with the raw amino-acid sequence, 565 residues long: MTVPSDLDISRATALRPLEDIAAQLGLGPHLLEPYGHNVAKISLDAIEELSDRPQARYVVVSAITPTPLGEGKTTTTVGLGQALRHLGKVSAVAVRQPSMGPTFGIKGGAAGGGYSQVVPMEALNLHLTGDMHAVTAAHNLLSAMLDNHLHKGNRLGVDPHRITWRRVLDVNDRDLRNIVTGMGGRADGTPRQTGFDITAASEVMAVLALSTSLRDMRRRLGRIVVGYTRDGSPVTAEDLRAAGAMTAIMREAIKPNLMQTTENTPVLVHAGPFGNIAHGNSSVVADRIAGRCADYLVTEAGFGADMGAERFFNIKCRTSGMRPDAAVLVATVRALKAHSGRYKVVAGRPLPPEMLAENPDDVLAGAENLRKQIDNIRLHGVSPVVAVNAFPTDHGSEHDAIRRVAEEEGARVAVSNHYSEGGKGALELAEVVVEAAEEPNRFRLLYPDSADLRTKIETIATRVYGADGVSYQPAAARALADYEAIGFGSLPVCIAKTHLSLSSDPSLLGAPTGWTLPVREVRASIGAGFIYAICGEMRTMPGLGSHPAAERIDIDEHGQIVGLS.

67 to 74 is an ATP binding site; sequence TPLGEGKT.

Belongs to the formate--tetrahydrofolate ligase family.

It carries out the reaction (6S)-5,6,7,8-tetrahydrofolate + formate + ATP = (6R)-10-formyltetrahydrofolate + ADP + phosphate. The protein operates within one-carbon metabolism; tetrahydrofolate interconversion. This chain is Formate--tetrahydrofolate ligase, found in Saccharopolyspora erythraea (strain ATCC 11635 / DSM 40517 / JCM 4748 / NBRC 13426 / NCIMB 8594 / NRRL 2338).